The chain runs to 69 residues: Large ribosomal subunit protein bL28 (69 aa).

The protein belongs to the bacterial ribosomal protein bL28 family.

The sequence is that of Large ribosomal subunit protein bL28 from Lawsonia intracellularis (strain PHE/MN1-00).